Reading from the N-terminus, the 402-residue chain is NADH-quinone oxidoreductase subunit D (402 aa).

The protein belongs to the complex I 49 kDa subunit family. As to quaternary structure, NDH-1 is composed of 14 different subunits. Subunits NuoB, C, D, E, F, and G constitute the peripheral sector of the complex.

The protein resides in the cell inner membrane. The catalysed reaction is a quinone + NADH + 5 H(+)(in) = a quinol + NAD(+) + 4 H(+)(out). Its function is as follows. NDH-1 shuttles electrons from NADH, via FMN and iron-sulfur (Fe-S) centers, to quinones in the respiratory chain. The immediate electron acceptor for the enzyme in this species is believed to be ubiquinone. Couples the redox reaction to proton translocation (for every two electrons transferred, four hydrogen ions are translocated across the cytoplasmic membrane), and thus conserves the redox energy in a proton gradient. The protein is NADH-quinone oxidoreductase subunit D of Xanthobacter autotrophicus (strain ATCC BAA-1158 / Py2).